Here is a 36-residue protein sequence, read N- to C-terminus: Cytochrome b6-f complex subunit 7 (36 aa).

Residues 9–29 (NGAFIMIGLTLLGLAWGFVII) form a helical membrane-spanning segment.

Belongs to the PetM family. In terms of assembly, the 4 large subunits of the cytochrome b6-f complex are cytochrome b6, subunit IV (17 kDa polypeptide, PetD), cytochrome f and the Rieske protein, while the 4 small subunits are PetG, PetL, PetM and PetN. The complex functions as a dimer.

It localises to the cellular thylakoid membrane. Its function is as follows. Component of the cytochrome b6-f complex, which mediates electron transfer between photosystem II (PSII) and photosystem I (PSI), cyclic electron flow around PSI, and state transitions. The sequence is that of Cytochrome b6-f complex subunit 7 from Synechocystis sp. (strain ATCC 27184 / PCC 6803 / Kazusa).